Reading from the N-terminus, the 484-residue chain is Endoglucanase 9 (484 aa).

The signal sequence occupies residues 1-21 (MTSLFFFVLLFSSLLISNGDA). Asp-77 acts as the Nucleophile in catalysis. Residues His-402, Asp-453, and Glu-462 contribute to the active site.

This sequence belongs to the glycosyl hydrolase 9 (cellulase E) family. Specifically expressed in root cap cells.

It is found in the secreted. Its subcellular location is the cell wall. It carries out the reaction Endohydrolysis of (1-&gt;4)-beta-D-glucosidic linkages in cellulose, lichenin and cereal beta-D-glucans.. This chain is Endoglucanase 9 (CEL3), found in Arabidopsis thaliana (Mouse-ear cress).